Reading from the N-terminus, the 187-residue chain is MASTSDIRNGLCIKFNHDIYKIIEFLHVKPGKGPAFVRTKLRSLSNGKVLDNTFSAGHKIDEVRVETHTYQYLYAEGDQFHFMNIESFEQITLDKKILDNPGLLKEGTNVMVQVNTETDLPLSVDMPASIILEVTYAEPGVKGNTATNATKSATVETGASINVPLFINEGDKIKIDTASGSYMERVK.

The protein belongs to the elongation factor P family.

It localises to the cytoplasm. The protein operates within protein biosynthesis; polypeptide chain elongation. Involved in peptide bond synthesis. Stimulates efficient translation and peptide-bond synthesis on native or reconstituted 70S ribosomes in vitro. Probably functions indirectly by altering the affinity of the ribosome for aminoacyl-tRNA, thus increasing their reactivity as acceptors for peptidyl transferase. The polypeptide is Elongation factor P (Flavobacterium psychrophilum (strain ATCC 49511 / DSM 21280 / CIP 103535 / JIP02/86)).